The primary structure comprises 271 residues: Endonuclease V (271 aa).

Residues 46–67 (TRTGDAPDVDQTTLSTSADDRT) form a disordered region. Mg(2+) is bound by residues Asp76 and Asp140.

The protein belongs to the endonuclease V family. It depends on Mg(2+) as a cofactor.

The protein localises to the cytoplasm. The catalysed reaction is Endonucleolytic cleavage at apurinic or apyrimidinic sites to products with a 5'-phosphate.. Functionally, DNA repair enzyme involved in the repair of deaminated bases. Selectively cleaves double-stranded DNA at the second phosphodiester bond 3' to a deoxyinosine leaving behind the intact lesion on the nicked DNA. This chain is Endonuclease V, found in Haloarcula marismortui (strain ATCC 43049 / DSM 3752 / JCM 8966 / VKM B-1809) (Halobacterium marismortui).